A 106-amino-acid polypeptide reads, in one-letter code: MRGNIAQLMQQAQKMQENLQKAQEEIAKIEVTGSAGGGMVSVTLTGAKECRKVRIDPSLTSDPEMLEDLIAAAFNDASNKIDAESKSKMGSATAGMQLPPGMKLPF.

The tract at residues 81–106 (IDAESKSKMGSATAGMQLPPGMKLPF) is disordered.

This sequence belongs to the YbaB/EbfC family. In terms of assembly, homodimer.

Its subcellular location is the cytoplasm. It is found in the nucleoid. In terms of biological role, binds to DNA and alters its conformation. May be involved in regulation of gene expression, nucleoid organization and DNA protection. The chain is Nucleoid-associated protein Smlt1015 from Stenotrophomonas maltophilia (strain K279a).